The chain runs to 122 residues: Large ribosomal subunit protein uL14 (122 aa).

Belongs to the universal ribosomal protein uL14 family. As to quaternary structure, part of the 50S ribosomal subunit. Forms a cluster with proteins L3 and L19. In the 70S ribosome, L14 and L19 interact and together make contacts with the 16S rRNA in bridges B5 and B8.

Its function is as follows. Binds to 23S rRNA. Forms part of two intersubunit bridges in the 70S ribosome. In Methylobacillus flagellatus (strain ATCC 51484 / DSM 6875 / VKM B-1610 / KT), this protein is Large ribosomal subunit protein uL14.